A 684-amino-acid polypeptide reads, in one-letter code: Divalent metal transporter 1 (684 aa).

Residues 1–228 lie on the Cytoplasmic side of the membrane; the sequence is MEKDFTERST…YRNKLSLYNK (228 aa). Residues 153–195 form a disordered region; sequence NKRNNNNNNNNNNNNNNNNNNNNNNNNNNNNNNNNSNNVDNRK. Over residues 156–191 the composition is skewed to low complexity; that stretch reads NNNNNNNNNNNNNNNNNNNNNNNNNNNNNNNNSNNV. A helical membrane pass occupies residues 229-247; sequence LRMCFNYFGPGWIVAIAYL. The Vacuolar portion of the chain corresponds to 248–275; it reads DPGNLCSNLNVGLIRSPDPTLEKDYSGY. A helical membrane pass occupies residues 276–299; sequence YLLWIMVYGHMLGFIFQVLSMRLG. Over 300 to 319 the chain is Cytoplasmic; it reads HVTGLDLASLCSKEFDRTTS. A helical transmembrane segment spans residues 320–345; that stretch reads TIIYVLVQIAIWGAHIQAIIGTFIAL. The Vacuolar segment spans residues 346–350; that stretch reads NLIFG. Residues 351–370 form a helical membrane-spanning segment; that stretch reads ISVKVAIFYTLFEAIIYSFL. Over 371 to 381 the chain is Cytoplasmic; that stretch reads ENKSLGLLENV. A helical membrane pass occupies residues 382–404; that stretch reads LSFLVGILAVSFFVNVFMTPINF. Residues 405 to 423 are Vacuolar-facing; the sequence is KELAISILYPRIPKGKEID. A helical transmembrane segment spans residues 424–445; it reads ALALLGSIISAHIFYLHTNLTA. Residues 446–465 are Cytoplasmic-facing; it reads KKKSVICNDLSLRRYNTLGT. The chain crosses the membrane as a helical span at residues 466–487; sequence IESGGSLFLSCLTNCIIVLTFA. At 488–515 the chain is on the vacuolar side; the sequence is EVNLKSFERRDQYNLFTAYEVMRKSFGK. A helical transmembrane segment spans residues 516-534; the sequence is ISMYIWSFGLLSSGNNSSF. Residues 535–554 lie on the Cytoplasmic side of the membrane; it reads MCEYASKSVVEGFLNKKINT. The helical transmembrane segment at 555 to 573 threads the bilayer; it reads FVRVFTFRLMLFSLLYMFL. Over 574 to 584 the chain is Vacuolar; the sequence is TLNKYTLDQLT. Residues 585 to 603 traverse the membrane as a helical segment; it reads NFINVIQVLLLPMATIPLY. The Cytoplasmic portion of the chain corresponds to 604-622; sequence RFSIHENVLGEFRLKKFPK. Residues 623–645 form a helical membrane-spanning segment; that stretch reads FAVFLIIIAIIISNVLLTFLDFV. Residues 646-650 are Vacuolar-facing; sequence HKETS. The helical transmembrane segment at 651–673 threads the bilayer; that stretch reads LITIFFLVIFSFLYFGFIIYFFN. Over 674–684 the chain is Cytoplasmic; the sequence is IPIKKNYIQRN.

This sequence belongs to the NRAMP (TC 2.A.55) family.

The protein localises to the vacuole membrane. It carries out the reaction Fe(2+)(in) = Fe(2+)(out). Functionally, iron transporter. Required for parasite development during the blood stages. Required for apicoplast biogenesis. Required for mitochondrial polarization. The polypeptide is Divalent metal transporter 1 (Plasmodium falciparum (isolate 3D7)).